A 459-amino-acid polypeptide reads, in one-letter code: RuvB-like helicase 1 (459 aa).

75-82 (GGPSTGKT) provides a ligand contact to ATP.

This sequence belongs to the RuvB family. May form heterododecamers with RVB2. Component of the SWR1 chromatin remodeling complex, the INO80 chromatin remodeling complex, and of the R2TP complex.

The protein localises to the nucleus. The catalysed reaction is ATP + H2O = ADP + phosphate + H(+). Functionally, DNA helicase which participates in several chromatin remodeling complexes, including the SWR1 and the INO80 complexes. The SWR1 complex mediates the ATP-dependent exchange of histone H2A for the H2A variant HZT1 leading to transcriptional regulation of selected genes by chromatin remodeling. The INO80 complex remodels chromatin by shifting nucleosomes and is involved in DNA repair. Also involved in pre-rRNA processing. The chain is RuvB-like helicase 1 (RVB1) from Eremothecium gossypii (strain ATCC 10895 / CBS 109.51 / FGSC 9923 / NRRL Y-1056) (Yeast).